The following is a 154-amino-acid chain: Histone H2B type F-M (154 aa).

Low complexity predominate over residues 1 to 18; that stretch reads MAAASAMAEASSETTSEE. The tract at residues 1–61 is disordered; it reads MAAASAMAEA…RGDSFGDSFT (61 aa). Residues 34-50 are compositionally biased toward basic residues; it reads QKQKRRGCRGSRRRHAN.

It belongs to the histone H2B family. In terms of assembly, the nucleosome is a histone octamer containing two molecules each of H2A, H2B, H3 and H4 assembled in one H3-H4 heterotetramer and two H2A-H2B heterodimers. The octamer wraps approximately 147 bp of DNA.

Its subcellular location is the nucleus. It localises to the chromosome. Core component of nucleosome. Nucleosomes wrap and compact DNA into chromatin, limiting DNA accessibility to the cellular machineries which require DNA as a template. Histones thereby play a central role in transcription regulation, DNA repair, DNA replication and chromosomal stability. DNA accessibility is regulated via a complex set of post-translational modifications of histones, also called histone code, and nucleosome remodeling. The sequence is that of Histone H2B type F-M from Homo sapiens (Human).